The sequence spans 482 residues: UDP-N-acetylmuramate--L-alanine ligase (482 aa).

123–129 (GTHGKTT) is an ATP binding site.

The protein belongs to the MurCDEF family.

It localises to the cytoplasm. It catalyses the reaction UDP-N-acetyl-alpha-D-muramate + L-alanine + ATP = UDP-N-acetyl-alpha-D-muramoyl-L-alanine + ADP + phosphate + H(+). It functions in the pathway cell wall biogenesis; peptidoglycan biosynthesis. In terms of biological role, cell wall formation. The sequence is that of UDP-N-acetylmuramate--L-alanine ligase from Pseudomonas putida (strain ATCC 700007 / DSM 6899 / JCM 31910 / BCRC 17059 / LMG 24140 / F1).